Here is a 707-residue protein sequence, read N- to C-terminus: Caprin-1 (707 aa).

2 stretches are compositionally biased toward low complexity: residues 1 to 15 (MPSA…SKSS) and 22 to 43 (GSSG…PATG). Residues 1–48 (MPSATSHSGSGSKSSGPPPPSGSSGSEAAAGAAAPASQHPATGTGAVQ) are disordered. P2 is subject to N-acetylproline. S10 bears the Phosphoserine mark. Residues 58–92 (VIDKKLRNLEKKKGKLDDYQERMNKGERLNQDQLD) are a coiled coil. S113 is modified (phosphoserine). Residues 123–151 (KTIKKTARREQLMREEAEQKRLKTVLELQ) adopt a coiled-coil conformation. R163 is subject to Omega-N-methylarginine. The interval 325 to 347 (LQQQPQAASPSVPEPHSLTPVAQ) is disordered. Positions 326 to 335 (QQQPQAASPS) are enriched in low complexity. Phosphoserine occurs at positions 333 and 341. Residues 358–379 (QDLMAQMQGPYNFIQDSMLDFE) form a G3BP1-binding region. 3 disordered regions span residues 412–443 (ESRL…YTAS), 523–558 (PVPP…EQTE), and 570–620 (TYHG…RGLM). The span at 431–443 (PLVSSTSEGYTAS) shows a compositional bias: polar residues. Low complexity predominate over residues 535–558 (QQSQYQASYNQSFSSQPHQVEQTE). Residues 572–603 (HGSQDQPHQVPGNHQQPPQQSTGFPRSSQPYY) are compositionally biased toward polar residues. A Phosphotyrosine modification is found at Y623. An omega-N-methylarginine mark is found at R624 and R631. Phosphotyrosine occurs at positions 634 and 637. Position 638 is an omega-N-methylarginine (R638). Over residues 641–655 (FSNTPNSGYTQSQFN) the composition is skewed to polar residues. Residues 641–707 (FSNTPNSGYT…MPQMNTQQVN (67 aa)) form a disordered region. O-linked (GlcNAc) serine glycans are attached at residues S642 and S647. Residues Y649, Y660, Y663, and Y668 each carry the phosphotyrosine modification. Low complexity-rich tracts occupy residues 674-684 (RGSGQSGPRGA) and 695-707 (NRGM…QQVN). R696 bears the Asymmetric dimethylarginine; alternate mark. R696 carries the omega-N-methylarginine; alternate modification.

The protein belongs to the caprin family. May form homomultimers. Interacts with G3BP1; interaction is direct and promotes stress granule formation. Interacts with G3BP2; interaction is direct and promotes stress granule formation. Interacts with PQBP1. Interacts with DDX3X. Interacts (when phosphorylated by EPHA4) with FMR1; interaction with FMR1 promotes formation of a membraneless compartment. Tyrosine phosphorylation by EPHA4 promotes interaction with FMR1 and liquid-liquid phase separation (LLPS) for the formation of a membraneless compartment that concentrates mRNAs with associated regulatory factors. In terms of processing, O-glycosylated (O-GlcNAcylated), in a cell cycle-dependent manner. O-glycosylation by OGT inhibit ability to undergo liquid-liquid phase separation (LLPS). As to expression, expressed in hippocampal and neocortical pyramidal neurons, but not in Purkinje cells.

It localises to the cytoplasm. The protein localises to the cytoplasmic ribonucleoprotein granule. It is found in the cytosol. Its subcellular location is the cell projection. The protein resides in the dendrite. It localises to the lamellipodium. Ability to mediate liquid-liquid phase separation is regulated by ATP: moderate concentrations of ATP enhance phase separation, whereas high concentrations of ATP lead to inhibition of phase separation. Its function is as follows. mRNA-binding protein that acts as a regulator of mRNAs transport, translation and/or stability, and which is involved in neurogenesis, synaptic plasticity in neurons and cell proliferation and migration in multiple cell types. Plays an essential role in cytoplasmic stress granule formation. Acts as an mRNA regulator by mediating formation of some phase-separated membraneless compartment: undergoes liquid-liquid phase separation upon binding to target mRNAs, leading to assemble mRNAs into cytoplasmic ribonucleoprotein granules that concentrate mRNAs with associated regulatory factors. Undergoes liquid-liquid phase separation following phosphorylation and interaction with FMR1, promoting formation of cytoplasmic ribonucleoprotein granules that concentrate mRNAs with factors that inhibit translation and mediate deadenylation of target mRNAs. In these cytoplasmic ribonucleoprotein granules, CAPRIN1 mediates recruitment of CNOT7 deadenylase, leading to mRNA deadenylation and degradation. Binds directly and selectively to MYC and CCND2 mRNAs. In neuronal cells, directly binds to several mRNAs associated with RNA granules, including BDNF, CAMK2A, CREB1, MAP2, NTRK2 mRNAs, as well as to GRIN1 and KPNB1 mRNAs, but not to rRNAs. This chain is Caprin-1 (Caprin1), found in Rattus norvegicus (Rat).